Here is a 473-residue protein sequence, read N- to C-terminus: H(+)/Cl(-) exchange transporter ClcA (473 aa).

The Cytoplasmic portion of the chain corresponds to 1–32 (MKTDTPSLETPQAARLRRRQLIRQLLERDKTP). The chain crosses the membrane as a helical span at residues 33–69 (LAILFMAAVVGTLVGLAAVAFDKGVAWLQNQRMEALV). The Periplasmic segment spans residues 70 to 76 (HTADNYP). Residues 77 to 100 (LLLTVAFLCSAVLAMFGYFLVRKY) traverse the membrane as a helical segment. The short motif at 106 to 110 (GSGIP) is the Selectivity filter part_1 element. Serine 107 is a chloride binding site. An intramembrane region (helical) is located at residues 109-116 (IPEIEGAL). Residues 117-123 (EDQRPVR) lie on the Cytoplasmic side of the membrane. 2 helical membrane passes run 124–141 (WWRVLPVKFFGGLGTLGG) and 148–166 (EGPTVQIGGNIGRMVLDIF). A Selectivity filter part_2 motif is present at residues 146–150 (GREGP). Residues 167-176 (RLKGDEARHT) are Cytoplasmic-facing. 2 intramembrane regions (helical) span residues 177–189 (LLATGAAAGLAAA) and 193–201 (PLAGILFII). Topologically, residues 202–214 (EEMRPQFRYTLIS) are cytoplasmic. A helical membrane pass occupies residues 215-232 (IKAVFIGVIMSTIMYRIF). The Periplasmic segment spans residues 233 to 252 (NHEVALIDVGKLSDAPLNTL). A helical membrane pass occupies residues 253–281 (WLYLILGIIFGIFGPIFNKWVLGMQDLLH). Topologically, residues 282 to 287 (RVHGGN) are cytoplasmic. Residues 288–309 (ITKWVLMGGAIGGLCGLLGFVA) traverse the membrane as a helical segment. Topologically, residues 310 to 329 (PATSGGGFNLIPIATAGNFS) are periplasmic. The next 2 membrane-spanning stretches (helical) occupy residues 330-349 (MGMLVFIFVARVITTLLCFS) and 355-376 (GIFAPMLALGTVLGTAFGMVVV). A Selectivity filter part_3 motif is present at residues 355–359 (GIFAP). Positions 356 and 357 each coordinate chloride. The Periplasmic segment spans residues 377–386 (ELFPQYHLEA). An intramembrane region (helical) is located at residues 387 to 401 (GTFAIAGMGALLAAS). Positions 402–404 (IRA) form an intramembrane region, note=Loop between two helices. Positions 405 to 416 (PLTGIILVLEMT) form an intramembrane region, helical. Positions 417-421 (DNYQL) form an intramembrane region, note=Loop between two helices. A helical membrane pass occupies residues 422 to 438 (ILPMIITGLGATLLAQF). The Cytoplasmic portion of the chain corresponds to 439-473 (TGGKPLYSEILARTLAKQEAEQLARSKAASASENT). Position 445 (tyrosine 445) interacts with chloride.

The protein belongs to the chloride channel (TC 2.A.49) family. ClcA subfamily. As to quaternary structure, homodimer.

It is found in the cell inner membrane. The enzyme catalyses 2 chloride(in) + H(+)(out) = 2 chloride(out) + H(+)(in). In terms of biological role, proton-coupled chloride transporter. Functions as antiport system and exchanges two chloride ions for 1 proton. Probably acts as an electrical shunt for an outwardly-directed proton pump that is linked to amino acid decarboxylation, as part of the extreme acid resistance (XAR) response. This is H(+)/Cl(-) exchange transporter ClcA from Shigella boydii serotype 4 (strain Sb227).